The primary structure comprises 156 residues: Proline dehydrogenase transcriptional activator (156 aa).

One can recognise an HTH asnC-type domain in the interval 10–71 (LDHFDLKILE…VLNPQKLGVD (62 aa)). A DNA-binding region (H-T-H motif) is located at residues 29–48 (VLQLSKRVGLSKTPCQTRLK).

In terms of biological role, transcriptional activator of the putA gene in response to proline. The protein is Proline dehydrogenase transcriptional activator (putR) of Rhizobium radiobacter (Agrobacterium tumefaciens).